The primary structure comprises 442 residues: MQGLYIKSYGCQMNVYDSLIMENIIKPLGFTVVNEPSEANIVILNTCHIREKASEKLYSELGKMRKIQETKDLTIVVAGCVAQAEGEQIFARAPFVDIVVGPQSIHTLPELIIKARRMKKQVINIDFPIISKFDAIPVEEYTKNQEVSAFISVQEGCNKFCTFCVVPYTRGEEYSRTVEAIFNEALVLSDSGVKEITLIGQNVNAYHGTYKGCEWDLGKLIQYLAKIPNIERIRYTTSHPRDMHQSLYEAHRSETKLMPFVHLPIQSGSDRILKKMNRKHTAEEYIDIINNLRKQRPDIAFSSDFIVGFPGETEEDFEHTMKLVQEVNFSQAYSFKYSPRPGTPSAEYPNQIPEEIKSQRIFRLQELLREQQLAFNRNMIGQTCSVLFNNKKGKFDNQIIGKTEYMQSCYINTDNTNQFYNSILPIKIIDAYQNSVTGIVVN.

The MTTase N-terminal domain maps to 2 to 117 (QGLYIKSYGC…LPELIIKARR (116 aa)). [4Fe-4S] cluster contacts are provided by Cys11, Cys47, Cys80, Cys157, Cys161, and Cys164. A Radical SAM core domain is found at 143-374 (KNQEVSAFIS…QELLREQQLA (232 aa)). In terms of domain architecture, TRAM spans 377–442 (RNMIGQTCSV…QNSVTGIVVN (66 aa)).

This sequence belongs to the methylthiotransferase family. MiaB subfamily. As to quaternary structure, monomer. [4Fe-4S] cluster serves as cofactor.

It localises to the cytoplasm. The enzyme catalyses N(6)-dimethylallyladenosine(37) in tRNA + (sulfur carrier)-SH + AH2 + 2 S-adenosyl-L-methionine = 2-methylsulfanyl-N(6)-dimethylallyladenosine(37) in tRNA + (sulfur carrier)-H + 5'-deoxyadenosine + L-methionine + A + S-adenosyl-L-homocysteine + 2 H(+). In terms of biological role, catalyzes the methylthiolation of N6-(dimethylallyl)adenosine (i(6)A), leading to the formation of 2-methylthio-N6-(dimethylallyl)adenosine (ms(2)i(6)A) at position 37 in tRNAs that read codons beginning with uridine. The sequence is that of tRNA-2-methylthio-N(6)-dimethylallyladenosine synthase from Ehrlichia chaffeensis (strain ATCC CRL-10679 / Arkansas).